A 126-amino-acid polypeptide reads, in one-letter code: uncharacterized protein (126 aa).

The Extracellular segment spans residues 1–9; the sequence is MCTYIITQS. Residues 10–30 form a helical membrane-spanning segment; that stretch reads FFFLPCLSFLFFKLVGFFDSV. Topologically, residues 31-73 are cytoplasmic; that stretch reads FTAGKSLRIMFELPIFDKLTSCFAAIDCSATSLDIPFAEEELF. Residues 74–94 traverse the membrane as a helical segment; the sequence is LMLVSEPVLIPFLFVFEFMLI. At 95–126 the chain is on the extracellular side; sequence CKPCGSRSRFGFPVKNVSDFEETLEFDPTLLV.

It localises to the membrane. This is an uncharacterized protein from Saccharomyces cerevisiae (strain ATCC 204508 / S288c) (Baker's yeast).